We begin with the raw amino-acid sequence, 640 residues long: Endoglucanase 1 (640 aa).

The N-terminal stretch at 1-24 is a signal peptide; it reads MARRGGAAASSSMANLLGVALVLA. Asp94 functions as the Nucleophile in the catalytic mechanism. Active-site residues include His433, Asp485, and Glu494. 2 N-linked (GlcNAc...) asparagine glycosylation sites follow: Asn528 and Asn548.

This sequence belongs to the glycosyl hydrolase 9 (cellulase E) family. As to expression, expressed in roots, leaf sheaths and flowers.

It localises to the secreted. It carries out the reaction Endohydrolysis of (1-&gt;4)-beta-D-glucosidic linkages in cellulose, lichenin and cereal beta-D-glucans.. The protein is Endoglucanase 1 (GLU7) of Oryza sativa subsp. japonica (Rice).